The sequence spans 361 residues: Large-conductance mechanosensitive channel MscMJLR (361 aa).

The next 5 helical transmembrane spans lie at 20–40 (ILSLISIILFIVIGKYANALI), 65–85 (LPVAIAIILSGFYFGVNFLYL), 89–109 (LKTAVNEGILTAFILCVVVFF), 137–157 (IVVLTKKLVRLVVWVVGLLLI), and 177–197 (LAVALASQNLVSNLIAGLIIL).

This sequence belongs to the MscS (TC 1.A.23) family.

Its subcellular location is the cell membrane. Functionally, large-conductance mechanosensitive channel that opens in response to stretch forces in the membrane lipid bilayer. Selective for cations. Rectifies with voltage. This is Large-conductance mechanosensitive channel MscMJLR from Methanocaldococcus jannaschii (strain ATCC 43067 / DSM 2661 / JAL-1 / JCM 10045 / NBRC 100440) (Methanococcus jannaschii).